The sequence spans 433 residues: Tol-Pal system protein TolB (433 aa).

The N-terminal stretch at 1-26 (MSLMTKLGFRALVASCLIAAGGAAHA) is a signal peptide.

This sequence belongs to the TolB family. In terms of assembly, the Tol-Pal system is composed of five core proteins: the inner membrane proteins TolA, TolQ and TolR, the periplasmic protein TolB and the outer membrane protein Pal. They form a network linking the inner and outer membranes and the peptidoglycan layer.

It is found in the periplasm. Functionally, part of the Tol-Pal system, which plays a role in outer membrane invagination during cell division and is important for maintaining outer membrane integrity. This Burkholderia pseudomallei (strain 1710b) protein is Tol-Pal system protein TolB.